The chain runs to 248 residues: Ribosomal RNA small subunit methyltransferase G (248 aa).

Residues glycine 85, phenylalanine 90, 108–110, 137–138, and arginine 156 contribute to the S-adenosyl-L-methionine site; these read DSS and AE.

Belongs to the methyltransferase superfamily. RNA methyltransferase RsmG family.

It localises to the cytoplasm. Its function is as follows. Specifically methylates the N7 position of a guanine in 16S rRNA. The chain is Ribosomal RNA small subunit methyltransferase G from Prochlorococcus marinus (strain NATL2A).